The primary structure comprises 200 residues: 5'(3')-deoxyribonucleotidase, cytosolic type (200 aa).

Aspartate 12 functions as the Nucleophile in the catalytic mechanism. Mg(2+) contacts are provided by aspartate 12 and aspartate 14. Aspartate 14 serves as the catalytic Proton donor. Phenylalanine 20, phenylalanine 46, tyrosine 67, and threonine 101 together coordinate substrate. A Phosphothreonine modification is found at threonine 102. Lysine 136 is a substrate binding site. Aspartate 147 lines the Mg(2+) pocket. The residue at position 184 (serine 184) is a Phosphoserine.

It belongs to the 5'(3')-deoxyribonucleotidase family. Homodimer. Requires Mg(2+) as cofactor.

It localises to the cytoplasm. Functionally, dephosphorylates the 5' and 2'(3')-phosphates of deoxyribonucleotides, with a preference for dUMP and dTMP, intermediate activity towards dGMP, and low activity towards dCMP and dAMP. In Mus musculus (Mouse), this protein is 5'(3')-deoxyribonucleotidase, cytosolic type (Nt5c).